Here is a 381-residue protein sequence, read N- to C-terminus: tRNA pseudouridine synthase D (381 aa).

The Nucleophile role is filled by D81. The TRUD domain occupies 160-335; the sequence is GMPNYFGSQR…TLGSRRFFWV (176 aa).

It belongs to the pseudouridine synthase TruD family.

It catalyses the reaction uridine(13) in tRNA = pseudouridine(13) in tRNA. Functionally, responsible for synthesis of pseudouridine from uracil-13 in transfer RNAs. This chain is tRNA pseudouridine synthase D, found in Helicobacter pylori (strain J99 / ATCC 700824) (Campylobacter pylori J99).